We begin with the raw amino-acid sequence, 445 residues long: Exodeoxyribonuclease 7 large subunit (445 aa).

It belongs to the XseA family. Heterooligomer composed of large and small subunits.

The protein resides in the cytoplasm. The catalysed reaction is Exonucleolytic cleavage in either 5'- to 3'- or 3'- to 5'-direction to yield nucleoside 5'-phosphates.. In terms of biological role, bidirectionally degrades single-stranded DNA into large acid-insoluble oligonucleotides, which are then degraded further into small acid-soluble oligonucleotides. The sequence is that of Exodeoxyribonuclease 7 large subunit from Staphylococcus aureus (strain USA300 / TCH1516).